The chain runs to 298 residues: MASLKEVKTRINSVKSTRKITSAMKMVASAKLHKAQGAIENMLPYERKLNKILTNFLSADLPVESPYIKAREVKRVAIVAFSSNTSLCGAFNANVIKMLLQTVGEFRTLGQDNILIFPVGKKVDEAVKRLGFEPQETSPTLSDKPSYQEASELAHRLMEMYVSGEIDRVELIYHHFKSMGVQILLRETYLPIDLTRVVDEEEKQKEEEVQGGEIANDYIIEPSAEELIANLIPTVLSQKLFTAAVDSNASEHAARTLAMQVATDNANELIQDLTKQYNKSRQQAITNELLDIVGGSMQ.

It belongs to the ATPase gamma chain family. In terms of assembly, F-type ATPases have 2 components, CF(1) - the catalytic core - and CF(0) - the membrane proton channel. CF(1) has five subunits: alpha(3), beta(3), gamma(1), delta(1), epsilon(1). CF(0) has three main subunits: a, b and c.

It localises to the cell inner membrane. Functionally, produces ATP from ADP in the presence of a proton gradient across the membrane. The gamma chain is believed to be important in regulating ATPase activity and the flow of protons through the CF(0) complex. This chain is ATP synthase gamma chain, found in Bacteroides thetaiotaomicron (strain ATCC 29148 / DSM 2079 / JCM 5827 / CCUG 10774 / NCTC 10582 / VPI-5482 / E50).